The sequence spans 399 residues: S-adenosylmethionine synthase (399 aa).

His17 lines the ATP pocket. Asp19 contacts Mg(2+). K(+) is bound at residue Glu45. Residues Glu58 and Gln101 each contribute to the L-methionine site. Residues 101 to 111 (QSADIAMGVDQ) form a flexible loop region. ATP is bound by residues 177–179 (DGK), 244–245 (RF), Asp253, 259–260 (RK), Ala276, and Lys280. An L-methionine-binding site is contributed by Asp253. Residue Lys284 coordinates L-methionine.

It belongs to the AdoMet synthase family. In terms of assembly, homotetramer; dimer of dimers. The cofactor is Mg(2+). Requires K(+) as cofactor.

The protein resides in the cytoplasm. It carries out the reaction L-methionine + ATP + H2O = S-adenosyl-L-methionine + phosphate + diphosphate. It participates in amino-acid biosynthesis; S-adenosyl-L-methionine biosynthesis; S-adenosyl-L-methionine from L-methionine: step 1/1. In terms of biological role, catalyzes the formation of S-adenosylmethionine (AdoMet) from methionine and ATP. The overall synthetic reaction is composed of two sequential steps, AdoMet formation and the subsequent tripolyphosphate hydrolysis which occurs prior to release of AdoMet from the enzyme. The polypeptide is S-adenosylmethionine synthase (Bacillus cereus (strain G9842)).